Reading from the N-terminus, the 619-residue chain is N-acetylmuramoyl-L-alanine amidase domain-containing protein SAOUHSC_02979 (619 aa).

Residues 1-27 (MPKNKILIYLLSTTLVLPTLVSPTAYA) form the signal peptide. Disordered stretches follow at residues 25–83 (AYAD…TIDD), 134–226 (SDYE…SMSD), and 238–290 (EDAK…NQKD). Basic and acidic residues-rich tracts occupy residues 30 to 65 (PQKDTTAKTTSHDSKKSNDDETSKDTTSKDIDKADK), 73 to 82 (NNDKKFKTID), and 137 to 146 (EQPRNGEKST). Low complexity predominate over residues 147–156 (NDSNKNSDNS). The segment covering 157–175 (IKNDTDTQSSKQDKADNQK) has biased composition (basic and acidic residues). Positions 176 to 192 (APKSNNTKPSTSNKQPN) are enriched in polar residues. Residues 214 to 226 (QKSSSKDNQSMSD) show a composition bias toward low complexity. Residues 238 to 260 (EDAKKTQKDYASQSKKDKNEKSN) are compositionally biased toward basic and acidic residues. Residues 327 to 468 (IAKDAHRIGQ…LNSIIKHYQL (142 aa)) form an N-acetylmuramoyl-L-alanine amidase region. The Peptidase C51 domain maps to 488 to 617 (DYDDSSDEFK…AAAEELSYIT (130 aa)).

This sequence in the N-terminal section; belongs to the N-acetylmuramoyl-L-alanine amidase 2 family.

It is found in the secreted. This Staphylococcus aureus (strain NCTC 8325 / PS 47) protein is N-acetylmuramoyl-L-alanine amidase domain-containing protein SAOUHSC_02979.